The following is a 180-amino-acid chain: MAKRVYAIAMRYAQALYELAKEQKSLDKWQEDLQDLSSLTEDASVAEFLSNPKIASARKHKVLAKLSNIDPLMLNLVDMLVATRRLGIMRAVSGEYNRLLNEARGVEDAIVTTAKPSSEADIEIIRQQLSKITGKKINVVTATDPGLIAGLKARIGDKLIDGSVSRRLVLLQNEISQGRI.

The protein belongs to the ATPase delta chain family. In terms of assembly, F-type ATPases have 2 components, F(1) - the catalytic core - and F(0) - the membrane proton channel. F(1) has five subunits: alpha(3), beta(3), gamma(1), delta(1), epsilon(1). F(0) has three main subunits: a(1), b(2) and c(10-14). The alpha and beta chains form an alternating ring which encloses part of the gamma chain. F(1) is attached to F(0) by a central stalk formed by the gamma and epsilon chains, while a peripheral stalk is formed by the delta and b chains.

The protein resides in the cell membrane. F(1)F(0) ATP synthase produces ATP from ADP in the presence of a proton or sodium gradient. F-type ATPases consist of two structural domains, F(1) containing the extramembraneous catalytic core and F(0) containing the membrane proton channel, linked together by a central stalk and a peripheral stalk. During catalysis, ATP synthesis in the catalytic domain of F(1) is coupled via a rotary mechanism of the central stalk subunits to proton translocation. In terms of biological role, this protein is part of the stalk that links CF(0) to CF(1). It either transmits conformational changes from CF(0) to CF(1) or is implicated in proton conduction. The polypeptide is ATP synthase subunit delta (Dehalococcoides mccartyi (strain ATCC BAA-2266 / KCTC 15142 / 195) (Dehalococcoides ethenogenes (strain 195))).